We begin with the raw amino-acid sequence, 454 residues long: Histidine--tRNA ligase (454 aa).

It belongs to the class-II aminoacyl-tRNA synthetase family. In terms of assembly, homodimer.

The protein localises to the cytoplasm. The catalysed reaction is tRNA(His) + L-histidine + ATP = L-histidyl-tRNA(His) + AMP + diphosphate + H(+). This chain is Histidine--tRNA ligase, found in Phocaeicola vulgatus (strain ATCC 8482 / DSM 1447 / JCM 5826 / CCUG 4940 / NBRC 14291 / NCTC 11154) (Bacteroides vulgatus).